The sequence spans 219 residues: Peroxiredoxin (219 aa).

A Thioredoxin domain is found at 2 to 164; that stretch reads PLIGDDAPSF…IKRIVVALQK (163 aa). Cys44 serves as the catalytic Cysteine sulfenic acid (-SOH) intermediate. A substrate-binding site is contributed by Arg127. Cys206 and Cys212 form a disulfide bridge.

It belongs to the peroxiredoxin family. Prx6 subfamily. In terms of assembly, homodecamer. Pentamer of dimers that assemble into a ring structure.

The protein localises to the cytoplasm. The catalysed reaction is a hydroperoxide + [thioredoxin]-dithiol = an alcohol + [thioredoxin]-disulfide + H2O. Its function is as follows. Thiol-specific peroxidase that catalyzes the reduction of hydrogen peroxide and organic hydroperoxides to water and alcohols, respectively. Plays a role in cell protection against oxidative stress by detoxifying peroxides. This is Peroxiredoxin from Methanosarcina mazei (strain ATCC BAA-159 / DSM 3647 / Goe1 / Go1 / JCM 11833 / OCM 88) (Methanosarcina frisia).